Consider the following 310-residue polypeptide: NAD-dependent protein deacylase sirtuin-5, mitochondrial (310 aa).

The N-terminal 36 residues, 1-36 (MQPLQIAPCRLLYGLYRGLKSPASTGTRICPAMARP), are a transit peptide targeting the mitochondrion. Residues 37-307 (SSNMADFRKL…PEALAPHETG (271 aa)) enclose the Deacetylase sirtuin-type domain. 58 to 77 (GAGVSAESGVPTFRGAGGYW) is an NAD(+) binding site. Positions 102 and 105 each coordinate substrate. 140–143 (QNID) is a binding site for NAD(+). The Proton acceptor role is filled by H158. Residues C166, C169, C207, and C212 each contribute to the Zn(2+) site. NAD(+) contacts are provided by residues 249-251 (GTS), 275-277 (NME), and C293.

This sequence belongs to the sirtuin family. Class III subfamily. As to quaternary structure, monomer. Homodimer. Interacts with CPS1. Interacts with PCCA. Requires Zn(2+) as cofactor.

It localises to the mitochondrion. The protein localises to the cytoplasm. It is found in the cytosol. The protein resides in the nucleus. It catalyses the reaction N(6)-malonyl-L-lysyl-[protein] + NAD(+) + H2O = 2''-O-malonyl-ADP-D-ribose + nicotinamide + L-lysyl-[protein]. It carries out the reaction N(6)-succinyl-L-lysyl-[protein] + NAD(+) + H2O = 2''-O-succinyl-ADP-D-ribose + nicotinamide + L-lysyl-[protein]. The catalysed reaction is N(6)-glutaryl-L-lysyl-[protein] + NAD(+) + H2O = 2''-O-glutaryl-ADP-D-ribose + nicotinamide + L-lysyl-[protein]. Its function is as follows. NAD-dependent lysine demalonylase, desuccinylase and deglutarylase that specifically removes malonyl, succinyl and glutaryl groups on target proteins. Activates CPS1 and contributes to the regulation of blood ammonia levels during prolonged fasting: acts by mediating desuccinylation and deglutarylation of CPS1, thereby increasing CPS1 activity in response to elevated NAD levels during fasting. Activates SOD1 by mediating its desuccinylation, leading to reduced reactive oxygen species. Activates SHMT2 by mediating its desuccinylation. Modulates ketogenesis through the desuccinylation and activation of HMGCS2. Has weak NAD-dependent protein deacetylase activity; however this activity may not be physiologically relevant in vivo. Can deacetylate cytochrome c (CYCS) and a number of other proteins in vitro such as UOX. This Canis lupus familiaris (Dog) protein is NAD-dependent protein deacylase sirtuin-5, mitochondrial.